The chain runs to 833 residues: MASKRKAAAMNAAAAEEPVDPSDELMFLCLGGGNEVGRSCHIIQYKGKTVMLDAGQHPAYDGLAALPFYDDFDLSTVDVLLISHFHIDHAASLPYVLAKTNFRGRVFMTHPTKAIYKWLIQDSVRVGNTSSNPTTQPVYTEQDHLNTFPQIEAIDYHTTHTISSIRITPYPAGHVLGAAMFLIEIAGLNIFFTGDYSREQDRHLVSAEVPKGVKIDVLITESTYGIASHVPRLEREQALMKSITSILNRGGRVLMPVFALGRAQELLLILDEYWGKHADFQKYPIYYASNLARKCMLIYQTYVGAMNDNIKRLFRERMAEAEASGDGAGKGGPWDFKYIRSLKNLDRFDDVGGCVMLASPGMLQNGVSRELLERWAPSEKNGVIITGYSVEGTMAKQIMQEPDQIQAVMSRSMAGARRMPGGDGEKVLIPRRCSVQEYSFAAHVDGVENREFIEEVQAPVVILVHGEQHNMMRLKSKLLSLNANKTAKVKVYSPRNCEELRIPFKADKIAKVVGKLACIQPPQSIHPDQTATPPLVTGVLVQNDFKLSLMAPEDLREYAGLNTTTITCKQRLTLSAAGVDLVKWALEGTFGNIEELPEMRRAKNGQNGHADKMITDGDDESKQEDADEEVASLVAAYLVMGCVSVRYRTNGEVELEWEGNMLNDGIADSVMAVLFSVESSPAAVKRSSAKHSHSHDLPEVNPHHSATPEERLERLLWFLEAQFGQDNVAPVTTPKLPPLEDVDDKNKNEGEDEDAMKTDEDGEDAQLQERQQKEIERLHKIGIPVPGVSIKVDKMSATVWLEDLEVESSHKVFADRVRAVVERAIEVTAPLWG.

Positions 84, 86, 88, 89, 174, and 195 each coordinate Zn(2+). His-443 acts as the Proton donor in catalysis. Residue His-465 participates in Zn(2+) binding. Disordered regions lie at residues 600-624 (RRAK…SKQE), 685-707 (KRSS…HSAT), and 728-767 (VAPV…DAQL). Basic and acidic residues-rich tracts occupy residues 694–707 (SHDL…HSAT) and 744–759 (DKNK…MKTD).

The protein belongs to the metallo-beta-lactamase superfamily. RNA-metabolizing metallo-beta-lactamase-like family. CPSF2/YSH1 subfamily.

The protein localises to the nucleus. Component of the cleavage factor I (CF I) involved in pre-mRNA 3'-end processing. The sequence is that of Endoribonuclease YSH1 (YSH1) from Gibberella zeae (strain ATCC MYA-4620 / CBS 123657 / FGSC 9075 / NRRL 31084 / PH-1) (Wheat head blight fungus).